The chain runs to 393 residues: S-adenosylmethionine synthase (393 aa).

Histidine 16 lines the ATP pocket. Residue aspartate 18 coordinates Mg(2+). Glutamate 44 contributes to the K(+) binding site. L-methionine-binding residues include glutamate 57 and glutamine 100. Positions 100-110 are flexible loop; it reads QSQDIAQGVDK. ATP contacts are provided by residues 167–169, 238–239, aspartate 247, 253–254, alanine 270, and lysine 274; these read DAK, RF, and RK. Residue aspartate 247 coordinates L-methionine. Lysine 278 lines the L-methionine pocket.

This sequence belongs to the AdoMet synthase family. In terms of assembly, homotetramer; dimer of dimers. The cofactor is Mg(2+). K(+) serves as cofactor.

It is found in the cytoplasm. The catalysed reaction is L-methionine + ATP + H2O = S-adenosyl-L-methionine + phosphate + diphosphate. The protein operates within amino-acid biosynthesis; S-adenosyl-L-methionine biosynthesis; S-adenosyl-L-methionine from L-methionine: step 1/1. Its function is as follows. Catalyzes the formation of S-adenosylmethionine (AdoMet) from methionine and ATP. The overall synthetic reaction is composed of two sequential steps, AdoMet formation and the subsequent tripolyphosphate hydrolysis which occurs prior to release of AdoMet from the enzyme. The sequence is that of S-adenosylmethionine synthase from Delftia acidovorans (strain DSM 14801 / SPH-1).